The sequence spans 452 residues: MRLSDLRGRTVAVWGAGREGRAAVIAIAAHGPADLVAVDDSANFLALPWEGPLAEAAPLVTGEEGFARLAAAEVVVRSPGVPNTHPWLVELRGRGVTVTQGSALWMADHARRTVGVTGSKGKSTTSSLISHLLTAVDRPNVFGGNIGVPLLDLPDADLYVLELSSYQCADLTDSPRVAVVTALFPEHLDAHGGEREYYRDKLNLLAHGPQTIVVNGADPRLAAELGDRPAVRAGSPDTTHVAPGPDGTPWFHLGDRPLFPRAVLPLVGRHNEGNLCVALAVLAALGVDVVARADALAVAVAGFQGLAHRLTEIADPSGLTFVDDTLATSPYAAMHAIDAYEGRPVTVIVGGADRGLDYAPLREHLAEREITVLGIPDSGQRIVATLAGLPRVRAEVVDDLVAAVRRARELTPADGVVLLSPAAPSYGRFRNFEHRSEVFAEAVRDTAGHPAR.

118-124 (GSKGKST) serves as a coordination point for ATP.

Belongs to the MurCDEF family. MurD2 subfamily.

Its subcellular location is the cytoplasm. The catalysed reaction is UDP-N-acetyl-alpha-D-muramoyl-L-alanine + L-glutamate + ATP = UDP-N-acetyl-alpha-D-muramoyl-L-alanyl-L-glutamate + ADP + phosphate + H(+). It functions in the pathway cell wall biogenesis; peptidoglycan biosynthesis. Functionally, cell wall formation. Catalyzes the addition of L-glutamate to the nucleotide precursor UDP-N-acetylmuramoyl-L-alanine. The sequence is that of UDP-N-acetylmuramoyl-L-alanine--L-glutamate ligase from Micromonospora sp. (strain ATCC 39149 / NRRL 15099 / SCC 1413).